We begin with the raw amino-acid sequence, 309 residues long: MAPSHWRLILNGKSTDNEDLREAVGVLRKRGIQLDVRVTWEEGDAERYVAEAIADGVQTVVAAGGDGTLSEVAAALAHHQDDAATLPSLGLVPLGTANDFATAAMIPLEPLGALGLIAERAAEPIDLLRIDADHGPHWCANVASGGFGTQVTVETDAGLKKMLGGLAYLITGMSRLGRIDPISAHFTGPDFSWEGEFIALGLGNGRQAGGGQALCPEALIDDGLLDVTIVPALNGEVAATLGTLVTGGKQAALERVAVRTRLPWLEIASVQPLTLNLDGEPETSRHFRVECVAARLRMHLPIDCPLRSA.

The DAGKc domain occupies 1-134 (MAPSHWRLIL…IDLLRIDADH (134 aa)). ATP is bound by residues threonine 39, 65 to 71 (GDGTLSE), and threonine 96. Mg(2+) is bound by residues leucine 219, aspartate 222, and leucine 224. Glutamate 280 serves as the catalytic Proton acceptor.

It belongs to the diacylglycerol/lipid kinase family. YegS lipid kinase subfamily. The cofactor is Mg(2+). Requires Ca(2+) as cofactor.

It is found in the cytoplasm. In terms of biological role, probably phosphorylates lipids; the in vivo substrate is unknown. The sequence is that of Probable lipid kinase YegS-like from Xanthomonas campestris pv. campestris (strain 8004).